A 347-amino-acid polypeptide reads, in one-letter code: UDP-rhamnose/UDP-galactose transporter 1 (347 aa).

Transmembrane regions (helical) follow at residues 11–31 (AVSD…IIMA), 43–63 (FGFA…VGMV), 80–100 (LLWF…SLML), 103–123 (VGFY…LEWI), 132–152 (EVKA…VTDV), 159–179 (FICA…IGSL), 195–215 (APIQ…LLSG), 223–243 (MTYG…FCNI), 256–276 (SFQV…WLLF), and 285–305 (IAGM…VDIE).

The protein belongs to the TPT transporter family. TPT (TC 2.A.7.9) subfamily. Widely expressed in the whole plant.

The protein localises to the golgi apparatus membrane. In terms of biological role, nucleotide-sugar transporter that transports UDP-rhamnose or UDP-galactose and UMP in a strict counter-exchange mode. This is UDP-rhamnose/UDP-galactose transporter 1 from Arabidopsis thaliana (Mouse-ear cress).